Consider the following 423-residue polypeptide: Kynureninase (423 aa).

Pyridoxal 5'-phosphate-binding positions include L105, S106, 133–136 (FPSD), D218, H221, and Y243. Position 244 is an N6-(pyridoxal phosphate)lysine (K244). Residues W273 and N301 each contribute to the pyridoxal 5'-phosphate site.

The protein belongs to the kynureninase family. In terms of assembly, homodimer. Pyridoxal 5'-phosphate is required as a cofactor.

The catalysed reaction is L-kynurenine + H2O = anthranilate + L-alanine + H(+). The enzyme catalyses 3-hydroxy-L-kynurenine + H2O = 3-hydroxyanthranilate + L-alanine + H(+). It functions in the pathway amino-acid degradation; L-kynurenine degradation; L-alanine and anthranilate from L-kynurenine: step 1/1. The protein operates within cofactor biosynthesis; NAD(+) biosynthesis; quinolinate from L-kynurenine: step 2/3. Its function is as follows. Catalyzes the cleavage of L-kynurenine (L-Kyn) and L-3-hydroxykynurenine (L-3OHKyn) into anthranilic acid (AA) and 3-hydroxyanthranilic acid (3-OHAA), respectively. This Xanthomonas oryzae pv. oryzae (strain PXO99A) protein is Kynureninase.